The sequence spans 809 residues: Endoplasmin homolog (809 aa).

Positions 1–18 (MRKWALSCALLLVLLLTT) are cleaved as a signal peptide. N111, D155, N168, and F200 together coordinate ATP. Residue N111 is glycosylated (N-linked (GlcNAc...) asparagine). A compositionally biased stretch (acidic residues) spans 293–320 (VPADEEESNEEEESTTETTEEEETEDDE). The disordered stretch occupies residues 293–329 (VPADEEESNEEEESTTETTEEEETEDDEEKKPKTKTV). 3 N-linked (GlcNAc...) asparagine glycosylation sites follow: N410, N450, and N617. The interval 766-809 (SLDLSPDAAVEEEEEVEEPEVEEKESAKQEAEEPEHEQYDKDEL) is disordered. Residues 774-788 (AVEEEEEVEEPEVEE) are compositionally biased toward acidic residues. The span at 789–809 (KESAKQEAEEPEHEQYDKDEL) shows a compositional bias: basic and acidic residues. A Prevents secretion from ER motif is present at residues 806 to 809 (KDEL).

The protein belongs to the heat shock protein 90 family.

The protein resides in the endoplasmic reticulum lumen. Its function is as follows. May have a molecular chaperone role in the processing of secreted materials. The protein is Endoplasmin homolog of Hordeum vulgare (Barley).